Reading from the N-terminus, the 325-residue chain is Peroxidase 45 (325 aa).

Positions 1-25 are cleaved as a signal peptide; that stretch reads MEKNTSQTIFSNFFLLLLLSSCVSA. 4 disulfides stabilise this stretch: Cys36–Cys115, Cys69–Cys74, Cys121–Cys321, and Cys200–Cys232. Catalysis depends on His67, which acts as the Proton acceptor. 5 residues coordinate Ca(2+): Asp68, Val71, Gly73, Asp75, and Ser77. Pro163 contacts substrate. Residue His193 coordinates heme b. Thr194 contributes to the Ca(2+) binding site. Residues Asp245, Ser248, and Asp253 each contribute to the Ca(2+) site.

The protein belongs to the peroxidase family. Classical plant (class III) peroxidase subfamily. Requires heme b as cofactor. It depends on Ca(2+) as a cofactor. As to expression, slightly expressed in roots.

The protein localises to the secreted. It catalyses the reaction 2 a phenolic donor + H2O2 = 2 a phenolic radical donor + 2 H2O. Removal of H(2)O(2), oxidation of toxic reductants, biosynthesis and degradation of lignin, suberization, auxin catabolism, response to environmental stresses such as wounding, pathogen attack and oxidative stress. These functions might be dependent on each isozyme/isoform in each plant tissue. The sequence is that of Peroxidase 45 (PER45) from Arabidopsis thaliana (Mouse-ear cress).